A 351-amino-acid chain; its full sequence is Dihydroorotate dehydrogenase (quinone) (351 aa).

Residues 67–71 and T91 each bind FMN; that span reads AGFDK. K71 is a binding site for substrate. 116–120 contacts substrate; sequence NAMGF. The FMN site is built by N145 and N178. N178 lines the substrate pocket. S181 acts as the Nucleophile in catalysis. Residue N183 coordinates substrate. Residues K214 and T242 each coordinate FMN. 243-244 contributes to the substrate binding site; that stretch reads NT. FMN contacts are provided by residues G262, G291, and 312 to 313; that span reads YT.

Belongs to the dihydroorotate dehydrogenase family. Type 2 subfamily. In terms of assembly, monomer. The cofactor is FMN.

The protein resides in the cell membrane. It carries out the reaction (S)-dihydroorotate + a quinone = orotate + a quinol. The protein operates within pyrimidine metabolism; UMP biosynthesis via de novo pathway; orotate from (S)-dihydroorotate (quinone route): step 1/1. In terms of biological role, catalyzes the conversion of dihydroorotate to orotate with quinone as electron acceptor. The sequence is that of Dihydroorotate dehydrogenase (quinone) from Nitratiruptor sp. (strain SB155-2).